We begin with the raw amino-acid sequence, 494 residues long: Cytochrome P450 monooxygenase acrF (494 aa).

Position 420 (cysteine 420) interacts with heme.

This sequence belongs to the cytochrome P450 family. Requires heme as cofactor.

It participates in secondary metabolite biosynthesis. Functionally, cytochrome P450 monooxygenase; part of the cluster that mediates the biosynthesis of acurin A, a highly reduced polyketide coupled to a serine via a peptide bond. The activities of the highly reducing polyketide synthase acrA and the nonribosomal peptide synthetase acrB are collectively responsible for the synthesis of the acurin A core structure with a heptaketide backbone produced by acrA covalently fused to a L-serine by acrB. After the formation of the PK-NRP hybrid product, it is detached from acrB by reductive release to set up the formation of the lactam ring by aldol condensation. The hydrolyase acrC then catalyzes water loss to generate a double bond in the ring. This double bond is probably reduced, which is followed by three oxidations at C-22 to generate the carboxylic acid moiety, involving probably the FAD-binding monooxygenase acrE and the cytochrome P450 monooxygenases acrD and acrF. Finally, a last methylation step performed by the O-methyltransferase acrG leads to the production of acurin A. The sequence is that of Cytochrome P450 monooxygenase acrF from Aspergillus aculeatus (strain ATCC 16872 / CBS 172.66 / WB 5094).